A 1029-amino-acid chain; its full sequence is Huntingtin-interacting protein 1 (1029 aa).

The ENTH domain occupies 32-160 (ERESFERTQT…EYHTKNPRFP (129 aa)). Ser-338 is subject to Phosphoserine. Positions 375-636 (HLIERLYREI…IQEALSQLEE (262 aa)) form a coiled coil. The interval 410–491 (SELEAELAEQ…HADLLRKNAE (82 aa)) is pDED. Residues 763 to 1004 (GLDIKQEELG…ELRKKHYELA (242 aa)) enclose the I/LWEQ domain. The important for actin binding stretch occupies residues 859 to 916 (RWTEGLISASKAVGWGATIMVDAADLVVQGKGKFEELMVCSREIAASTAQLVAASKVK). A disordered region spans residues 1009–1029 (GWEEGTEASPSTVQEAIPDKE).

Belongs to the SLA2 family. Homodimer. Binds actin. Binds HTT (via N-terminus). This interaction is restricted to the brain. Binds to IFT57. In normal conditions, it poorly interacts with IFT57, HIP1 being strongly associated with HTT. However, in mutant HTT proteins with a long poly-Gln region, interaction between HTT and HIP1 is inhibited, promoting the interaction between HIP1 and IFT57. Interacts with CLTB (via N-terminus). Interacts (via coiled coil domain) with AR. Interacts with AP2A1, AP2A2, CLTC and HIP1R. Interacts with GRIA1, GRIN2A and GRIN2B. As to expression, most abundantly expressed in brain. In brain, expressed in cortical tissue, hippocampus, the molecular layer of the cerebellum and olfactory bulb. Also expressed in spinal cord and bone marrow (at protein level). Expressed in reproductive tissues.

The protein localises to the cytoplasm. It is found in the nucleus. It localises to the endomembrane system. The protein resides in the cytoplasmic vesicle. Its subcellular location is the clathrin-coated vesicle membrane. Functionally, plays a role in clathrin-mediated endocytosis and trafficking. Involved in regulating AMPA receptor trafficking in the central nervous system in an NMDA-dependent manner. Regulates presynaptic nerve terminal activity. Enhances androgen receptor (AR)-mediated transcription. May act as a proapoptotic protein that induces cell death by acting through the intrinsic apoptosis pathway. Binds 3-phosphoinositides (via ENTH domain). May act through the ENTH domain to promote cell survival by stabilizing receptor tyrosine kinases following ligand-induced endocytosis. May play a functional role in the cell filament networks. May be required for differentiation, proliferation, and/or survival of somatic and germline progenitors. The protein is Huntingtin-interacting protein 1 of Mus musculus (Mouse).